A 390-amino-acid polypeptide reads, in one-letter code: Tuftelin (390 aa).

Coiled-coil stretches lie at residues 88–126 and 163–352; these read DKMT…KLDR and PSMS…EKQV. Residues 356 to 383 are disordered; the sequence is NFSTQARAKTENLGSVRISKPPSPKPMP.

The protein belongs to the tuftelin family. Interacts with TFIP11. May form oligomers. Ameloblasts, and also non-odontogenic tissues including kidney, lung, liver and testis.

The protein resides in the secreted. Involved in the structural organization of the epidermis. Involved in the mineralization and structural organization of enamel. The chain is Tuftelin (Tuft1) from Mus musculus (Mouse).